Here is a 171-residue protein sequence, read N- to C-terminus: 3-hydroxydecanoyl-[acyl-carrier-protein] dehydratase (171 aa).

The active site involves His-70.

The protein belongs to the thioester dehydratase family. FabA subfamily. Homodimer.

The protein resides in the cytoplasm. It carries out the reaction a (3R)-hydroxyacyl-[ACP] = a (2E)-enoyl-[ACP] + H2O. It catalyses the reaction (3R)-hydroxydecanoyl-[ACP] = (2E)-decenoyl-[ACP] + H2O. The catalysed reaction is (2E)-decenoyl-[ACP] = (3Z)-decenoyl-[ACP]. It participates in lipid metabolism; fatty acid biosynthesis. Functionally, necessary for the introduction of cis unsaturation into fatty acids. Catalyzes the dehydration of (3R)-3-hydroxydecanoyl-ACP to E-(2)-decenoyl-ACP and then its isomerization to Z-(3)-decenoyl-ACP. Can catalyze the dehydratase reaction for beta-hydroxyacyl-ACPs with saturated chain lengths up to 16:0, being most active on intermediate chain length. This is 3-hydroxydecanoyl-[acyl-carrier-protein] dehydratase from Shewanella sp. (strain MR-4).